The primary structure comprises 293 residues: ATP phosphoribosyltransferase (293 aa).

This sequence belongs to the ATP phosphoribosyltransferase family. Long subfamily. It depends on Mg(2+) as a cofactor.

Its subcellular location is the cytoplasm. It carries out the reaction 1-(5-phospho-beta-D-ribosyl)-ATP + diphosphate = 5-phospho-alpha-D-ribose 1-diphosphate + ATP. Its pathway is amino-acid biosynthesis; L-histidine biosynthesis; L-histidine from 5-phospho-alpha-D-ribose 1-diphosphate: step 1/9. With respect to regulation, feedback inhibited by histidine. Functionally, catalyzes the condensation of ATP and 5-phosphoribose 1-diphosphate to form N'-(5'-phosphoribosyl)-ATP (PR-ATP). Has a crucial role in the pathway because the rate of histidine biosynthesis seems to be controlled primarily by regulation of HisG enzymatic activity. This is ATP phosphoribosyltransferase from Nitratidesulfovibrio vulgaris (strain ATCC 29579 / DSM 644 / CCUG 34227 / NCIMB 8303 / VKM B-1760 / Hildenborough) (Desulfovibrio vulgaris).